We begin with the raw amino-acid sequence, 186 residues long: Alkyl hydroperoxide reductase AhpD (186 aa).

Cysteine 132 acts as the Proton donor in catalysis. Cysteine 132 and cysteine 135 are oxidised to a cystine. The Cysteine sulfenic acid (-SOH) intermediate role is filled by cysteine 135.

Belongs to the AhpD family.

The enzyme catalyses N(6)-[(R)-dihydrolipoyl]-L-lysyl-[lipoyl-carrier protein] + a hydroperoxide = N(6)-[(R)-lipoyl]-L-lysyl-[lipoyl-carrier protein] + an alcohol + H2O. In terms of biological role, antioxidant protein with alkyl hydroperoxidase activity. Required for the reduction of the AhpC active site cysteine residues and for the regeneration of the AhpC enzyme activity. The polypeptide is Alkyl hydroperoxide reductase AhpD (Anaeromyxobacter dehalogenans (strain 2CP-1 / ATCC BAA-258)).